Reading from the N-terminus, the 304-residue chain is N-acetyl-D-glucosamine kinase (304 aa).

ATP contacts are provided by residues 4 to 11 (GFDMGGTK) and 133 to 140 (GLGGGLVI). Residues His-157, Cys-177, Cys-179, and Cys-184 each coordinate Zn(2+).

This sequence belongs to the ROK (NagC/XylR) family. NagK subfamily.

The enzyme catalyses N-acetyl-D-glucosamine + ATP = N-acetyl-D-glucosamine 6-phosphate + ADP + H(+). The protein operates within cell wall biogenesis; peptidoglycan recycling. In terms of biological role, catalyzes the phosphorylation of N-acetyl-D-glucosamine (GlcNAc) derived from cell-wall degradation, yielding GlcNAc-6-P. The sequence is that of N-acetyl-D-glucosamine kinase from Pectobacterium carotovorum subsp. carotovorum (strain PC1).